The sequence spans 327 residues: BarH-like 1 homeobox protein (327 aa).

Disordered regions lie at residues 1 to 90 (MEGS…AQSR), 112 to 184 (APYS…ARTA), and 305 to 327 (GASE…AQPR). A compositionally biased stretch (low complexity) spans 33–54 (RSPLELSPRSESSSDCSSPASP). Over residues 79-90 (QPGQLSAPAQSR) the composition is skewed to polar residues. Composition is skewed to basic and acidic residues over residues 133–143 (AAEDFRDKLDK) and 152–166 (SEYK…EISS). The segment at residues 178 to 237 (PRKARTAFTDHQLAQLERSFERQKYLSVQDRMELAASLNLTDTQVKTWYQNRRTKWKRQT) is a DNA-binding region (homeobox). Low complexity predominate over residues 316–327 (LAGVLPRAAQPR).

This sequence belongs to the BAR homeobox family.

It localises to the nucleus. The sequence is that of BarH-like 1 homeobox protein (BARHL1) from Homo sapiens (Human).